The sequence spans 311 residues: tRNA dimethylallyltransferase (311 aa).

Position 13-20 (13-20 (GPTASGKT)) interacts with ATP. Position 15–20 (15–20 (TASGKT)) interacts with substrate. Interaction with substrate tRNA stretches follow at residues 38–41 (DSMQ) and 166–170 (QRGLR).

It belongs to the IPP transferase family. In terms of assembly, monomer. It depends on Mg(2+) as a cofactor.

It catalyses the reaction adenosine(37) in tRNA + dimethylallyl diphosphate = N(6)-dimethylallyladenosine(37) in tRNA + diphosphate. Catalyzes the transfer of a dimethylallyl group onto the adenine at position 37 in tRNAs that read codons beginning with uridine, leading to the formation of N6-(dimethylallyl)adenosine (i(6)A). The polypeptide is tRNA dimethylallyltransferase (Staphylococcus aureus (strain MSSA476)).